A 399-amino-acid chain; its full sequence is DNA replication and repair protein RecF (399 aa).

30–37 (GSNGIGKT) lines the ATP pocket.

It belongs to the RecF family.

The protein localises to the cytoplasm. In terms of biological role, the RecF protein is involved in DNA metabolism; it is required for DNA replication and normal SOS inducibility. RecF binds preferentially to single-stranded, linear DNA. It also seems to bind ATP. The chain is DNA replication and repair protein RecF from Paenarthrobacter aurescens (strain TC1).